The chain runs to 148 residues: Cdc42 effector protein 5 (148 aa).

2 disordered regions span residues 1–89 and 111–148; these read MPVL…DPLL and RPEA…VIGL. The CRIB domain maps to 23-37; the sequence is ISAPLGDFRHTLHVG. Arg-38 is modified (omega-N-methylarginine). The segment covering 55 to 76 has biased composition (pro residues); sequence GPPPEPRAPPAGAPRSPPPPAV. A compositionally biased stretch (low complexity) spans 77-87; the sequence is PQSAAPSPADP.

The protein belongs to the BORG/CEP family. As to quaternary structure, interacts with CDC42, in a GTP-dependent manner, and with SEPT7.

It is found in the endomembrane system. It localises to the cytoplasm. The protein localises to the cytoskeleton. Functionally, probably involved in the organization of the actin cytoskeleton. May act downstream of CDC42 to induce actin filament assembly leading to cell shape changes. Induces pseudopodia formation in fibroblasts. Inhibits MAPK8 independently of CDC42 binding. Controls septin organization and this effect is negatively regulated by CDC42. This is Cdc42 effector protein 5 (CDC42EP5) from Homo sapiens (Human).